We begin with the raw amino-acid sequence, 198 residues long: Transmembrane gamma-carboxyglutamic acid protein 2 (198 aa).

Residues 1–17 (MRGRPSLLLVYMGLATC) form the signal peptide. A propeptide spanning residues 18–51 (LDTSPHREQNQVLDIFLDAPEAQSFLVGRRRFPR) is cleaved from the precursor. One can recognise a Gla domain in the interval 52–98 (ANHWDLELLTPGNLERECLEERCSWEEAREYFEDNTLTERFWESYTY). Topologically, residues 52-111 (ANHWDLELLTPGNLERECLEERCSWEEAREYFEDNTLTERFWESYTYNGKGGRGRVDVAG) are extracellular. Cys69 and Cys74 are disulfide-bonded. Glu72 carries the 4-carboxyglutamate modification. The chain crosses the membrane as a helical span at residues 112 to 132 (LAVGLTSGILLIVLAGLGAFW). At 133–198 (YLHYRRRRLR…PPYSSLRRPH (66 aa)) the chain is on the cytoplasmic side. A disordered region spans residues 156–198 (PLSPQTPQSPPLPPGLPTYEQALAASGVHDAPPPPYSSLRRPH). Pro residues predominate over residues 162 to 171 (PQSPPLPPGL). An LPXY motif; mediates binding to WW domain-containing proteins motif is present at residues 171–174 (LPTY). The short motif at 188–191 (PPPY) is the PPXY motif; mediates binding to WW domain-containing proteins element.

In terms of assembly, interacts with NEDD4. Interacts with transcriptional coactivator YAP1. Post-translationally, gamma-carboxyglutamate residues are formed by vitamin K dependent carboxylation. These residues are essential for the binding of calcium.

It localises to the cell membrane. This is Transmembrane gamma-carboxyglutamic acid protein 2 (Prrg2) from Mus musculus (Mouse).